The following is a 238-amino-acid chain: Ribonuclease PH (238 aa).

Phosphate-binding positions include Arg86 and 124–126 (GTR).

Belongs to the RNase PH family. In terms of assembly, homohexameric ring arranged as a trimer of dimers.

It catalyses the reaction tRNA(n+1) + phosphate = tRNA(n) + a ribonucleoside 5'-diphosphate. In terms of biological role, phosphorolytic 3'-5' exoribonuclease that plays an important role in tRNA 3'-end maturation. Removes nucleotide residues following the 3'-CCA terminus of tRNAs; can also add nucleotides to the ends of RNA molecules by using nucleoside diphosphates as substrates, but this may not be physiologically important. Probably plays a role in initiation of 16S rRNA degradation (leading to ribosome degradation) during starvation. This is Ribonuclease PH from Actinobacillus pleuropneumoniae serotype 7 (strain AP76).